The chain runs to 348 residues: Phosphate acyltransferase (348 aa).

Belongs to the PlsX family. As to quaternary structure, homodimer. Probably interacts with PlsY.

It localises to the cytoplasm. The catalysed reaction is a fatty acyl-[ACP] + phosphate = an acyl phosphate + holo-[ACP]. It participates in lipid metabolism; phospholipid metabolism. Its function is as follows. Catalyzes the reversible formation of acyl-phosphate (acyl-PO(4)) from acyl-[acyl-carrier-protein] (acyl-ACP). This enzyme utilizes acyl-ACP as fatty acyl donor, but not acyl-CoA. In Francisella tularensis subsp. novicida (strain U112), this protein is Phosphate acyltransferase.